The following is a 353-amino-acid chain: Serine/threonine-protein kinase SRK2G (353 aa).

The Protein kinase domain occupies 4–260 (YDVVKDLGAG…LKEIKNHPWY (257 aa)). ATP contacts are provided by residues 10–18 (LGAGNFGVA) and Lys-33. Catalysis depends on Asp-123, which acts as the Proton acceptor. The disordered stretch occupies residues 299–353 (RNPAPSTSAVKSSGSGADEEEEEDVEAEVEEEEDDEDEYEKHVKEAQSCQESDKA). Residues 302 to 313 (APSTSAVKSSGS) are compositionally biased toward polar residues. Over residues 315-336 (ADEEEEEDVEAEVEEEEDDEDE) the composition is skewed to acidic residues. Basic and acidic residues predominate over residues 337 to 353 (YEKHVKEAQSCQESDKA).

The protein belongs to the protein kinase superfamily. Ser/Thr protein kinase family. Expressed in seedlings.

It localises to the nucleus. The enzyme catalyses L-seryl-[protein] + ATP = O-phospho-L-seryl-[protein] + ADP + H(+). It catalyses the reaction L-threonyl-[protein] + ATP = O-phospho-L-threonyl-[protein] + ADP + H(+). The polypeptide is Serine/threonine-protein kinase SRK2G (SRK2G) (Arabidopsis thaliana (Mouse-ear cress)).